The primary structure comprises 274 residues: Large ribosomal subunit protein uL2 (274 aa).

Residues A224–R259 are disordered.

This sequence belongs to the universal ribosomal protein uL2 family. As to quaternary structure, part of the 50S ribosomal subunit. Forms a bridge to the 30S subunit in the 70S ribosome.

In terms of biological role, one of the primary rRNA binding proteins. Required for association of the 30S and 50S subunits to form the 70S ribosome, for tRNA binding and peptide bond formation. It has been suggested to have peptidyltransferase activity; this is somewhat controversial. Makes several contacts with the 16S rRNA in the 70S ribosome. In Citrifermentans bemidjiense (strain ATCC BAA-1014 / DSM 16622 / JCM 12645 / Bem) (Geobacter bemidjiensis), this protein is Large ribosomal subunit protein uL2.